The following is a 310-amino-acid chain: Keratin, type II cytoskeletal 8 (310 aa).

Residues Q1–N38 form a disordered region. A Glycyl lysine isopeptide (Lys-Gly) (interchain with G-Cter in SUMO2) cross-link involves residue K5. S7, S9, S15, and S16 each carry phosphoserine. The span at S7 to N38 shows a compositional bias: low complexity. Position 17 is an omega-N-methylarginine (R17). 3 positions are modified to phosphoserine: S18, S21, and S25. Omega-N-methylarginine is present on R26. S28, S31, and S33 each carry phosphoserine. R34 bears the Omega-N-methylarginine mark. S37 is subject to Phosphoserine. Asymmetric dimethylarginine; alternate is present on R42. R42 is modified (omega-N-methylarginine; alternate). The segment at E92 to L127 is coil 1A. The region spanning E92–E310 is the IF rod domain. K102 is modified (N6-malonyllysine). Glycyl lysine isopeptide (Lys-Gly) (interchain with G-Cter in SUMO2) cross-links involve residues K123 and K131. The segment at Q128–Y144 is linker 1. Residues I145–M236 are coil 1B. K198 participates in a covalent cross-link: Glycyl lysine isopeptide (Lys-Gly) (interchain with G-Cter in SUMO1); alternate. K198 is covalently cross-linked (Glycyl lysine isopeptide (Lys-Gly) (interchain with G-Cter in SUMO2); alternate). At K208 the chain carries N6-acetyllysine. A Phosphotyrosine modification is found at Y229. The segment at Q237 to I260 is linker 12. Phosphoserine occurs at positions 254 and 275. The tract at residues I261–E310 is coil 2. K286 is covalently cross-linked (Glycyl lysine isopeptide (Lys-Gly) (interchain with G-Cter in SUMO2)). K296 participates in a covalent cross-link: Glycyl lysine isopeptide (Lys-Gly) (interchain with G-Cter in SUMO2); alternate. Residue K296 is modified to N6-acetyllysine; alternate. Residue K305 forms a Glycyl lysine isopeptide (Lys-Gly) (interchain with G-Cter in SUMO2) linkage.

Belongs to the intermediate filament family. As to quaternary structure, heterotetramer of two type I and two type II keratins. Forms a heterodimer with KRT18. Associates with KRT20. Interacts with PNN. When associated with KRT19, interacts with DMD. Interacts with APEX1. Interacts with GPER1. Interacts with EPPK1. Interacts with PKP1 and PKP2. Post-translationally, O-glycosylated. O-GlcNAcylation at multiple sites increases solubility, and decreases stability by inducing proteasomal degradation. In terms of processing, O-glycosylated (O-GlcNAcylated), in a cell cycle-dependent manner.

The protein resides in the cytoplasm. It is found in the nucleus. The protein localises to the nucleoplasm. It localises to the nucleus matrix. In terms of biological role, together with KRT19, helps to link the contractile apparatus to dystrophin at the costameres of striated muscle. This chain is Keratin, type II cytoskeletal 8, found in Potorous tridactylus (Potoroo).